A 466-amino-acid polypeptide reads, in one-letter code: Uronate isomerase (466 aa).

Belongs to the metallo-dependent hydrolases superfamily. Uronate isomerase family.

It catalyses the reaction D-glucuronate = D-fructuronate. It carries out the reaction aldehydo-D-galacturonate = keto-D-tagaturonate. Its pathway is carbohydrate metabolism; pentose and glucuronate interconversion. This Rhizorhabdus wittichii (strain DSM 6014 / CCUG 31198 / JCM 15750 / NBRC 105917 / EY 4224 / RW1) (Sphingomonas wittichii) protein is Uronate isomerase.